The sequence spans 361 residues: S-adenosylmethionine decarboxylase proenzyme (361 aa).

Residues E11 and E14 contribute to the active site. S71 acts as the Schiff-base intermediate with substrate; via pyruvic acid in catalysis. S71 bears the Pyruvic acid (Ser); by autocatalysis mark. Residue C85 is the Proton donor; for catalytic activity of the active site. Catalysis depends on proton acceptor; for processing activity residues S234 and H247.

This sequence belongs to the eukaryotic AdoMetDC family. Pyruvate serves as cofactor. Post-translationally, is synthesized initially as an inactive proenzyme. Formation of the active enzyme involves a self-maturation process in which the active site pyruvoyl group is generated from an internal serine residue via an autocatalytic post-translational modification. Two non-identical subunits are generated from the proenzyme in this reaction, and the pyruvate is formed at the N-terminus of the alpha chain, which is derived from the carboxyl end of the proenzyme. The post-translation cleavage follows an unusual pathway, termed non-hydrolytic serinolysis, in which the side chain hydroxyl group of the serine supplies its oxygen atom to form the C-terminus of the beta chain, while the remainder of the serine residue undergoes an oxidative deamination to produce ammonia and the pyruvoyl group blocking the N-terminus of the alpha chain.

The enzyme catalyses S-adenosyl-L-methionine + H(+) = S-adenosyl 3-(methylsulfanyl)propylamine + CO2. It participates in amine and polyamine biosynthesis; S-adenosylmethioninamine biosynthesis; S-adenosylmethioninamine from S-adenosyl-L-methionine: step 1/1. In Daucus carota (Wild carrot), this protein is S-adenosylmethionine decarboxylase proenzyme (SAMDC).